A 186-amino-acid polypeptide reads, in one-letter code: MIDETSQALRDFSQRYCDLWQQKSGHAPASQELYGIPSPCVMATDEDEVWWQPRPFTLAPNLDAVERALDIRLQPAVTAFYTSQFAGDMTGTLDGRPLSLVQVWSEDDFIRVQENLIGHLVMKRRLKQSPTLFIATTDSELEVISVCNVSGEVILEQLGTKKRQVIASSIENLLIALQPLIINCSN.

The protein belongs to the Syd family.

The protein resides in the cell inner membrane. Its function is as follows. Interacts with the SecY protein in vivo. May bind preferentially to an uncomplexed state of SecY, thus functioning either as a chelating agent for excess SecY in the cell or as a regulatory factor that negatively controls the translocase function. This is Protein Syd from Erwinia tasmaniensis (strain DSM 17950 / CFBP 7177 / CIP 109463 / NCPPB 4357 / Et1/99).